Reading from the N-terminus, the 659-residue chain is Acetyl-coenzyme A synthetase (659 aa).

Residues 206–209 and Thr324 each bind CoA; that span reads RRGK. ATP is bound by residues 400–402, 424–429, Asp516, Arg531, and Arg542; these read GEP and DTWWQT. Mg(2+) contacts are provided by Val553 and His555. Arg600 provides a ligand contact to CoA.

This sequence belongs to the ATP-dependent AMP-binding enzyme family. Requires Mg(2+) as cofactor.

The catalysed reaction is acetate + ATP + CoA = acetyl-CoA + AMP + diphosphate. Functionally, catalyzes the conversion of acetate into acetyl-CoA (AcCoA), an essential intermediate at the junction of anabolic and catabolic pathways. AcsA undergoes a two-step reaction. In the first half reaction, AcsA combines acetate with ATP to form acetyl-adenylate (AcAMP) intermediate. In the second half reaction, it can then transfer the acetyl group from AcAMP to the sulfhydryl group of CoA, forming the product AcCoA. The sequence is that of Acetyl-coenzyme A synthetase (acsA) from Methanothrix thermoacetophila (strain DSM 6194 / JCM 14653 / NBRC 101360 / PT) (Methanosaeta thermophila).